A 74-amino-acid polypeptide reads, in one-letter code: Exodeoxyribonuclease 7 small subunit (74 aa).

This sequence belongs to the XseB family. As to quaternary structure, heterooligomer composed of large and small subunits.

Its subcellular location is the cytoplasm. It carries out the reaction Exonucleolytic cleavage in either 5'- to 3'- or 3'- to 5'-direction to yield nucleoside 5'-phosphates.. Its function is as follows. Bidirectionally degrades single-stranded DNA into large acid-insoluble oligonucleotides, which are then degraded further into small acid-soluble oligonucleotides. The protein is Exodeoxyribonuclease 7 small subunit of Neisseria meningitidis serogroup C / serotype 2a (strain ATCC 700532 / DSM 15464 / FAM18).